We begin with the raw amino-acid sequence, 125 residues long: Cu-Zn superoxide dismutase-like protein OPG175 (125 aa).

A disulfide bond links Cys-52 and Cys-102.

Belongs to the Cu-Zn superoxide dismutase family.

The protein localises to the virion. It is found in the host cytoplasm. Superoxide dismutase-like protein with no enzymatic activity. The chain is Cu-Zn superoxide dismutase-like protein OPG175 (OPG175) from Monkeypox virus.